The sequence spans 120 residues: Autophagy-related protein 8d (120 aa).

Residue Gly117 is the site of Phosphatidylethanolamine amidated glycine attachment. The propeptide at 118–120 is removed in mature form; that stretch reads IFF.

This sequence belongs to the ATG8 family. In terms of assembly, interacts with ATG4B. Interacts with NBR1. In terms of processing, the C-terminal 3 residues are removed by ATG4 to expose Gly-117 at the C-terminus. This Gly-117 forms then a thioester bond with the 'Cys-558' of ATG7 (E1-like activating enzyme) before being transferred to the 'Cys-258' of ATG3 (the specific E2 conjugating enzyme), in order to be finally amidated with phosphatidylethanolamine. This lipid modification anchors ATG8 to autophagosomes. In terms of tissue distribution, constitutively expressed.

The protein localises to the cytoplasmic vesicle. It is found in the autophagosome membrane. It localises to the vacuole membrane. Its subcellular location is the cytoplasm. The protein resides in the cytoskeleton. Ubiquitin-like modifier involved in autophagosomes formation. May mediate the delivery of the autophagosomes to the vacuole via the microtubule cytoskeleton. This Arabidopsis thaliana (Mouse-ear cress) protein is Autophagy-related protein 8d (ATG8D).